The sequence spans 346 residues: 4-hydroxy-2-oxohexanoate aldolase (346 aa).

A Pyruvate carboxyltransferase domain is found at 7-259 (VRITDTSLRD…KTGIDFFDIA (253 aa)). 15-16 (RD) is a binding site for substrate. A Mn(2+)-binding site is contributed by aspartate 16. Histidine 19 (proton acceptor) is an active-site residue. Substrate-binding residues include serine 169 and histidine 198. Residues histidine 198 and histidine 200 each coordinate Mn(2+). Residue tyrosine 289 coordinates substrate.

Belongs to the 4-hydroxy-2-oxovalerate aldolase family. As to quaternary structure, homodimer. Forms a heterotetramer composed of two aldolase (HsaF) and two dehydrogenase (HsaG) subunits. Mn(2+) is required as a cofactor.

The enzyme catalyses (S)-4-hydroxy-2-oxohexanoate = propanal + pyruvate. The catalysed reaction is (S)-4-hydroxy-2-oxopentanoate = acetaldehyde + pyruvate. In terms of biological role, involved in cholesterol degradation. Catalyzes the retro-aldol cleavage of 4-hydroxy-2-oxohexanoate (HOHA) to pyruvate and propanal. Can also catalyze the cleavage of 4-hydroxy-2-oxopentanoate (HOPA) to pyruvate and acetaldehyde. The aldehydes produced by this reaction are directly channeled to the dehydrogenase HsaG. In Mycobacterium bovis (strain ATCC BAA-935 / AF2122/97), this protein is 4-hydroxy-2-oxohexanoate aldolase.